Consider the following 1076-residue polypeptide: Bifunctional glutamine synthetase adenylyltransferase/adenylyl-removing enzyme (1076 aa).

The segment at 1–521 is adenylyl removase; the sequence is MESSIFKPSS…LHLDIYYRPM (521 aa). An adenylyl transferase region spans residues 524–1076; the sequence is VNAQMENDQI…LERNRRRAQR (553 aa). A compositionally biased stretch (low complexity) spans 1042-1056; it reads TATASAATQQPQTAP. The interval 1042-1076 is disordered; that stretch reads TATASAATQQPQTAPRPRMHVIAPRLERNRRRAQR.

This sequence belongs to the GlnE family. The cofactor is Mg(2+).

It carries out the reaction [glutamine synthetase]-O(4)-(5'-adenylyl)-L-tyrosine + phosphate = [glutamine synthetase]-L-tyrosine + ADP. The enzyme catalyses [glutamine synthetase]-L-tyrosine + ATP = [glutamine synthetase]-O(4)-(5'-adenylyl)-L-tyrosine + diphosphate. In terms of biological role, involved in the regulation of glutamine synthetase GlnA, a key enzyme in the process to assimilate ammonia. When cellular nitrogen levels are high, the C-terminal adenylyl transferase (AT) inactivates GlnA by covalent transfer of an adenylyl group from ATP to specific tyrosine residue of GlnA, thus reducing its activity. Conversely, when nitrogen levels are low, the N-terminal adenylyl removase (AR) activates GlnA by removing the adenylyl group by phosphorolysis, increasing its activity. The regulatory region of GlnE binds the signal transduction protein PII (GlnB) which indicates the nitrogen status of the cell. The polypeptide is Bifunctional glutamine synthetase adenylyltransferase/adenylyl-removing enzyme (Bifidobacterium longum (strain DJO10A)).